The primary structure comprises 39 residues: Colipase (39 aa).

2 disulfide bridges follow: C16–C27 and C22–C38.

This sequence belongs to the colipase family. In terms of assembly, forms a 1:1 stoichiometric complex with pancreatic lipase. In terms of tissue distribution, expressed by the pancreas.

Its subcellular location is the secreted. Functionally, colipase is a cofactor of pancreatic lipase. It allows the lipase to anchor itself to the lipid-water interface. Without colipase the enzyme is washed off by bile salts, which have an inhibitory effect on the lipase. This Squalus acanthias (Spiny dogfish) protein is Colipase.